A 396-amino-acid polypeptide reads, in one-letter code: CCA-adding enzyme (396 aa).

Residues Gly32 and Arg35 each contribute to the ATP site. Gly32 and Arg35 together coordinate CTP. Residues Asp45 and Asp47 each coordinate Mg(2+). ATP is bound by residues Arg116, Asp159, Arg162, Arg165, and Arg168. Residues Arg116, Asp159, Arg162, Arg165, and Arg168 each coordinate CTP.

The protein belongs to the tRNA nucleotidyltransferase/poly(A) polymerase family. Bacterial CCA-adding enzyme type 3 subfamily. In terms of assembly, homodimer. The cofactor is Mg(2+).

It carries out the reaction a tRNA precursor + 2 CTP + ATP = a tRNA with a 3' CCA end + 3 diphosphate. It catalyses the reaction a tRNA with a 3' CCA end + 2 CTP + ATP = a tRNA with a 3' CCACCA end + 3 diphosphate. In terms of biological role, catalyzes the addition and repair of the essential 3'-terminal CCA sequence in tRNAs without using a nucleic acid template. Adds these three nucleotides in the order of C, C, and A to the tRNA nucleotide-73, using CTP and ATP as substrates and producing inorganic pyrophosphate. tRNA 3'-terminal CCA addition is required both for tRNA processing and repair. Also involved in tRNA surveillance by mediating tandem CCA addition to generate a CCACCA at the 3' terminus of unstable tRNAs. While stable tRNAs receive only 3'-terminal CCA, unstable tRNAs are marked with CCACCA and rapidly degraded. This is CCA-adding enzyme from Lactobacillus delbrueckii subsp. bulgaricus (strain ATCC BAA-365 / Lb-18).